A 253-amino-acid chain; its full sequence is Triosephosphate isomerase (253 aa).

Residue 15–17 (NWK) coordinates substrate. The active-site Electrophile is the His101. Catalysis depends on Glu171, which acts as the Proton acceptor. Residues Gly177, Ser216, and 237 to 238 (GG) each bind substrate.

Belongs to the triosephosphate isomerase family. Homodimer.

Its subcellular location is the cytoplasm. The catalysed reaction is D-glyceraldehyde 3-phosphate = dihydroxyacetone phosphate. It functions in the pathway carbohydrate biosynthesis; gluconeogenesis. The protein operates within carbohydrate degradation; glycolysis; D-glyceraldehyde 3-phosphate from glycerone phosphate: step 1/1. Involved in the gluconeogenesis. Catalyzes stereospecifically the conversion of dihydroxyacetone phosphate (DHAP) to D-glyceraldehyde-3-phosphate (G3P). The chain is Triosephosphate isomerase from Caulobacter vibrioides (strain ATCC 19089 / CIP 103742 / CB 15) (Caulobacter crescentus).